The sequence spans 512 residues: Glycerol-3-phosphate dehydrogenase (512 aa).

An FAD-binding site is contributed by Asp-16–Glu-44.

The protein belongs to the FAD-dependent glycerol-3-phosphate dehydrogenase family. FAD is required as a cofactor.

The protein resides in the cytoplasm. The catalysed reaction is a quinone + sn-glycerol 3-phosphate = dihydroxyacetone phosphate + a quinol. In Pseudomonas aeruginosa (strain ATCC 15692 / DSM 22644 / CIP 104116 / JCM 14847 / LMG 12228 / 1C / PRS 101 / PAO1), this protein is Glycerol-3-phosphate dehydrogenase (glpD).